The sequence spans 424 residues: Subtilisin-like protease 2 (424 aa).

An N-terminal signal peptide occupies residues 1-17 (MQLLNLGLLLLLPFVAG). A propeptide spanning residues 18-123 (EIAPQPEPLR…VHPDQHVYLA (106 aa)) is cleaved from the precursor. The region spanning 37–123 (QYIVTLKEGL…VHPDQHVYLA (87 aa)) is the Inhibitor I9 domain. The Peptidase S8 domain maps to 132 to 424 (RWGLGYMSSK…RKFTLPKNTK (293 aa)). Active-site charge relay system residues include Asp-170 and His-202. Asn-249, Asn-262, and Asn-350 each carry an N-linked (GlcNAc...) asparagine glycan. Ser-359 serves as the catalytic Charge relay system. N-linked (GlcNAc...) asparagine glycosylation occurs at Asn-390.

The protein belongs to the peptidase S8 family.

It is found in the secreted. Its function is as follows. Secreted subtilisin-like serine protease with keratinolytic activity that contributes to pathogenicity. This chain is Subtilisin-like protease 2 (SUB2), found in Arthroderma otae (Microsporum canis).